A 233-amino-acid polypeptide reads, in one-letter code: Snake venom serine protease BthaTL (233 aa).

The Peptidase S1 domain occupies 1 to 224 (VIGGDECDIN…YLPWIQSIIA (224 aa)). 6 cysteine pairs are disulfide-bonded: Cys-7–Cys-138, Cys-25–Cys-41, Cys-73–Cys-231, Cys-117–Cys-185, Cys-149–Cys-164, and Cys-175–Cys-200. Residues His-40 and Asp-85 each act as charge relay system in the active site. Ser-179 acts as the Charge relay system in catalysis.

The protein belongs to the peptidase S1 family. Snake venom subfamily. Monomer. In terms of tissue distribution, expressed by the venom gland.

It localises to the secreted. Snake venom serine protease that may act in the hemostasis system of the prey. This Bothrops alternatus (Urutu) protein is Snake venom serine protease BthaTL.